A 254-amino-acid chain; its full sequence is Low affinity immunoglobulin gamma Fc region receptor III-A (254 aa).

The signal sequence occupies residues 1–20 (MWHLLPPSALLLLISSVTKA). The Extracellular portion of the chain corresponds to 21 to 209 (ADPSKAVVLL…IAPLFPLWQQ (189 aa)). Ig-like C2-type domains lie at 23-104 (PSKA…VQLQ) and 121-174 (KGES…YYCR). 4 N-linked (GlcNAc...) asparagine glycosylation sites follow: Asn42, Asn63, Asn166, and Asn181. Intrachain disulfides connect Cys47/Cys90 and Cys129/Cys173. The helical transmembrane segment at 210–230 (IAFCLMMGLLFAVDTGLYFFV) threads the bilayer. Residues 231–254 (RRDLRRSMVHKEEYNFKWSQAQDK) are Cytoplasmic-facing.

In terms of assembly, forms a heterooligomeric complex with ITAM-containing signaling subunits FCER1G. Interacts (via transmembrane domain) with signaling subunits; this interaction is a prerequisite for receptor complex expression on the cell surface and intracellular signal transduction. Binds the Fc region of antigen-complexed IgG. Post-translationally, N-glycosylated. Phosphorylated following receptor ligation.

It is found in the cell membrane. In terms of biological role, receptor for the invariable Fc fragment of immunoglobulin gamma (IgG). Binds with intermediate affinity to both IgG2a and IgG2b. Can bind to IgG2a and IgG2b monomers. Does not display binding to IgG1 or IgG3. Recognizes neutralizing virus-specific IgGs displayed on the cell surface of infected cells and triggers antibody-dependent cellular cytotoxicity (ADCC). Confers protection to lethal influenza virus infection. On splenic dendritic cells, uptakes antigen immune complexes and efficiently divert them into MHC class I and II antigen presentation pathways to provide for superior priming of CD4-positive and CD8-positive T cell immune responses. Mediates neutrophil activation by IgG complexes redundantly with FCGR2A. Plays a role in promoting bone resorption by enhancing osteoclast differentiation following binding to IgG2a. Also acts as a receptor for the Fc region of immunoglobulin epsilon (IgE). Binds with low affinity to both the a and b allotypes of IgE. Has also been shown to bind to IgE allotype a only but not to allotype b. Binds aggregated IgE but not the monomeric form and bound monomeric IgG is readily displaced by IgE complexes. Binding to IgE promotes macrophage-mediated phagocytosis, antigen presentation to T cells, production of pro-inflammatory cytokines and the late phase of cutaneous allergic reactions. Mediates enhanced ADCC in response to afucosylated IgGs. This Cavia porcellus (Guinea pig) protein is Low affinity immunoglobulin gamma Fc region receptor III-A.